The primary structure comprises 132 residues: UPF0299 membrane protein YohJ (132 aa).

The next 4 helical transmembrane spans lie at Ile-7–Phe-27, Leu-31–Ala-51, Gly-63–Met-83, and Phe-93–Trp-113.

This sequence belongs to the UPF0299 family.

It localises to the cell inner membrane. This is UPF0299 membrane protein YohJ from Salmonella arizonae (strain ATCC BAA-731 / CDC346-86 / RSK2980).